A 608-amino-acid polypeptide reads, in one-letter code: Isoprene synthase, chloroplastic (608 aa).

Residues 1 to 45 (MATNLLCLSNKLSSPTPTPSTRFPQSKNFITQKTSLANPKPWRVI) constitute a chloroplast transit peptide. Asp-350 serves as a coordination point for dimethylallyl diphosphate. Mg(2+)-binding residues include Asp-350 and Asp-354. The short motif at 350 to 354 (DDVYD) is the DDXXD motif element. Glu-428, Arg-494, and Asn-497 together coordinate dimethylallyl diphosphate. Residues Asn-497, Thr-501, and Glu-505 each contribute to the Mg(2+) site.

It belongs to the terpene synthase family. Tpsb subfamily. The cofactor is Mg(2+). Mn(2+) serves as cofactor.

It localises to the plastid. The protein localises to the chloroplast. It catalyses the reaction dimethylallyl diphosphate = isoprene + diphosphate. Its function is as follows. Lyase that catalyzes the formation of isoprene from dimethylallyl diphosphate. In Pueraria montana var. lobata (Kudzu vine), this protein is Isoprene synthase, chloroplastic (ISPS).